Here is a 613-residue protein sequence, read N- to C-terminus: ATP-dependent zinc metalloprotease FtsH (613 aa).

At 1–4 (MVKN) the chain is on the cytoplasmic side. Residues 5–25 (LIFWLVITVVLMSVFQNFNSS) traverse the membrane as a helical segment. The Extracellular portion of the chain corresponds to 26–98 (DTSNHRVDYS…VGEIPEEPSL (73 aa)). The helical transmembrane segment at 99 to 119 (LISIFISWFPMLLLIGVWIFF) threads the bilayer. Over 120–613 (MRQMQMGGGK…WLEVDQKKDI (494 aa)) the chain is Cytoplasmic. Residue 192-199 (GPPGTGKT) coordinates ATP. Histidine 414 is a binding site for Zn(2+). Glutamate 415 is a catalytic residue. Histidine 418 and aspartate 492 together coordinate Zn(2+).

The protein in the central section; belongs to the AAA ATPase family. This sequence in the C-terminal section; belongs to the peptidase M41 family. In terms of assembly, homohexamer. It depends on Zn(2+) as a cofactor.

The protein resides in the cell membrane. In terms of biological role, acts as a processive, ATP-dependent zinc metallopeptidase for both cytoplasmic and membrane proteins. Plays a role in the quality control of integral membrane proteins. The polypeptide is ATP-dependent zinc metalloprotease FtsH (Buchnera aphidicola subsp. Schizaphis graminum (strain Sg)).